We begin with the raw amino-acid sequence, 123 residues long: MNAITETVDLQAPPPVPLVFTDSAAAKVKDLLAEEGNPELKLRVFVQGGGCSGFQYGFTFDEVVNEDDTVLDKEGVQLLVDPMSFQYLVGAEIDYKEDLEGAQFVIRNPNATTTCGCGSSFSV.

Cys51, Cys115, and Cys117 together coordinate iron-sulfur cluster.

This sequence belongs to the HesB/IscA family. Homodimer. Iron-sulfur cluster is required as a cofactor.

Its function is as follows. Required for insertion of 4Fe-4S clusters. The chain is Putative iron-sulfur cluster insertion protein ErpA from Bordetella avium (strain 197N).